A 424-amino-acid chain; its full sequence is Dihydroorotase (424 aa).

Positions 58 and 60 each coordinate Zn(2+). Substrate-binding positions include 60-62 and Asn92; that span reads HLR. Residues Asp150, His177, and His230 each contribute to the Zn(2+) site. Position 276 (Asn276) interacts with substrate. Asp303 is a Zn(2+) binding site. Residue Asp303 is part of the active site. Substrate-binding positions include His307 and 321–322; that span reads FG.

Belongs to the metallo-dependent hydrolases superfamily. DHOase family. Class I DHOase subfamily. The cofactor is Zn(2+).

It catalyses the reaction (S)-dihydroorotate + H2O = N-carbamoyl-L-aspartate + H(+). Its pathway is pyrimidine metabolism; UMP biosynthesis via de novo pathway; (S)-dihydroorotate from bicarbonate: step 3/3. Functionally, catalyzes the reversible cyclization of carbamoyl aspartate to dihydroorotate. This chain is Dihydroorotase, found in Staphylococcus aureus (strain MRSA252).